We begin with the raw amino-acid sequence, 335 residues long: Probable cytosolic iron-sulfur protein assembly protein Ciao1 (335 aa).

WD repeat units follow at residues 12 to 51 (GHKGRIWGVAWHPKGNVFASCGEDKAIRIWSLNGNTWTTK), 57 to 96 (GHKRTIREIRWSPCGQYLASASFDGTTAIWSKSSGEFECN), 101 to 140 (GHENEVKSVSWSRSGGLLATCSRDKSVWIWEVAGDDEFEC), 146 to 185 (PHTQDVKRVVWHPTKELLASASYDNTIKMFAEDALDSDWD), 192 to 231 (SHTSTVWSIDFDATGERLVSCSDDTSLKIWQAYHPGNDAG), 250 to 289 (QHSRAIYDVSWCKLTNLIATACGDDGIRIFKETSDSKRDE), and 301 to 335 (AHDQDVNSVEWNPVVEGQLISCSDDGTIKVWKMTE).

The protein belongs to the WD repeat CIA1 family.

Functionally, essential component of the cytosolic iron-sulfur (Fe/S) protein assembly machinery. Required for the maturation of extramitochondrial Fe/S proteins. This Drosophila ananassae (Fruit fly) protein is Probable cytosolic iron-sulfur protein assembly protein Ciao1.